A 138-amino-acid polypeptide reads, in one-letter code: MEIGYIFILAGFLVIALEAIVPGLYFPAWGIALLIYGVVLLIIPQYAFISAIIAGVLTIIILHKFVYGVGKEIKVGAERFVGMIGIAIEDFEENGYGRIKIENQIWLAKSKDKIKNGDKVEIVGVEGVSLIVKKVEGE.

Transmembrane regions (helical) follow at residues 1-21 (MEIGYIFILAGFLVIALEAIV) and 46-66 (YAFISAIIAGVLTIIILHKFV).

It localises to the cell membrane. This is an uncharacterized protein from Methanocaldococcus jannaschii (strain ATCC 43067 / DSM 2661 / JAL-1 / JCM 10045 / NBRC 100440) (Methanococcus jannaschii).